A 381-amino-acid polypeptide reads, in one-letter code: L-lactate dehydrogenase (381 aa).

An FMN hydroxy acid dehydrogenase domain is found at 1-380; sequence MIISASTDYR…TRDSLVRELG (380 aa). Tyrosine 24 serves as a coordination point for substrate. FMN-binding residues include serine 106 and glutamine 127. Tyrosine 129 contributes to the substrate binding site. Threonine 155 is a binding site for FMN. Arginine 164 serves as a coordination point for substrate. Lysine 251 serves as a coordination point for FMN. Residue histidine 275 is the Proton acceptor of the active site. Arginine 278 is a binding site for substrate. FMN is bound at residue 306–330; sequence DSGIRSGLDVVRMIALGADTVLIGR.

Belongs to the FMN-dependent alpha-hydroxy acid dehydrogenase family. Homotetramer. FMN is required as a cofactor.

It is found in the cell inner membrane. It carries out the reaction (S)-lactate + A = pyruvate + AH2. Its function is as follows. Catalyzes the conversion of L-lactate to pyruvate. Is coupled to the respiratory chain. The polypeptide is L-lactate dehydrogenase (Pseudomonas entomophila (strain L48)).